The following is a 155-amino-acid chain: Sec-independent protein translocase protein TatB (155 aa).

A helical transmembrane segment spans residues 1 to 21 (MFGMGFFEILVVLVVAIIFLG). Residues 109-155 (SLENNAPPKHLNKEVSNREVFHNEPPKEIELIANNNTTKHDKEKEHV) are disordered. Basic and acidic residues-rich tracts occupy residues 119–138 (LNKEVSNREVFHNEPPKEIE) and 146–155 (TKHDKEKEHV).

This sequence belongs to the TatB family. In terms of assembly, the Tat system comprises two distinct complexes: a TatABC complex, containing multiple copies of TatA, TatB and TatC subunits, and a separate TatA complex, containing only TatA subunits. Substrates initially bind to the TatABC complex, which probably triggers association of the separate TatA complex to form the active translocon.

It localises to the cell inner membrane. Functionally, part of the twin-arginine translocation (Tat) system that transports large folded proteins containing a characteristic twin-arginine motif in their signal peptide across membranes. Together with TatC, TatB is part of a receptor directly interacting with Tat signal peptides. TatB may form an oligomeric binding site that transiently accommodates folded Tat precursor proteins before their translocation. This is Sec-independent protein translocase protein TatB from Helicobacter acinonychis (strain Sheeba).